The following is a 378-amino-acid chain: RNA polymerase sigma factor SigA (378 aa).

The interval 1–29 (MKNKTEVKNGGEKKNSKKVSKEESAKEKN) is disordered. The sigma-70 factor domain-2 stretch occupies residues 145-215 (LAEANLRLVV…TRAIADQART (71 aa)). The Interaction with polymerase core subunit RpoC motif lies at 169–172 (DLIQ). The sigma-70 factor domain-3 stretch occupies residues 224 to 300 (ETINKLIRVS…DDEAPAPADA (77 aa)). The sigma-70 factor domain-4 stretch occupies residues 313–366 (ILNTLTPREEKVLRLRFGLDDGRARTLEEVGKEFNVTRERIRQIEAKALRKLRH). Positions 339 to 358 (LEEVGKEFNVTRERIRQIEA) form a DNA-binding region, H-T-H motif.

It belongs to the sigma-70 factor family. RpoD/SigA subfamily. As to quaternary structure, interacts transiently with the RNA polymerase catalytic core.

It localises to the cytoplasm. Sigma factors are initiation factors that promote the attachment of RNA polymerase to specific initiation sites and are then released. This sigma factor is the primary sigma factor during exponential growth. This is RNA polymerase sigma factor SigA from Clostridium acetobutylicum (strain ATCC 824 / DSM 792 / JCM 1419 / IAM 19013 / LMG 5710 / NBRC 13948 / NRRL B-527 / VKM B-1787 / 2291 / W).